The sequence spans 453 residues: Bifunctional protein GlmU (453 aa).

The segment at 1–227 (MNKLSVVILA…LMEVEGVNNR (227 aa)) is pyrophosphorylase. Residues 9–12 (LAAG), Lys-23, Gln-74, 79–80 (GT), 101–103 (YGD), Gly-138, Glu-152, Asn-167, and Asn-225 contribute to the UDP-N-acetyl-alpha-D-glucosamine site. Asp-103 is a binding site for Mg(2+). Position 225 (Asn-225) interacts with Mg(2+). Positions 228 to 248 (LQLANLERHYQRKQVEKLLLA) are linker. The N-acetyltransferase stretch occupies residues 249 to 453 (GVTFADPARF…ISNWQRPKRK (205 aa)). Residues Arg-331 and Lys-349 each contribute to the UDP-N-acetyl-alpha-D-glucosamine site. His-361 serves as the catalytic Proton acceptor. Positions 364 and 375 each coordinate UDP-N-acetyl-alpha-D-glucosamine. Acetyl-CoA contacts are provided by residues Ala-378, 384–385 (NY), Ser-403, Ala-421, and Arg-438.

In the N-terminal section; belongs to the N-acetylglucosamine-1-phosphate uridyltransferase family. It in the C-terminal section; belongs to the transferase hexapeptide repeat family. Homotrimer. It depends on Mg(2+) as a cofactor.

The protein localises to the cytoplasm. The enzyme catalyses alpha-D-glucosamine 1-phosphate + acetyl-CoA = N-acetyl-alpha-D-glucosamine 1-phosphate + CoA + H(+). It carries out the reaction N-acetyl-alpha-D-glucosamine 1-phosphate + UTP + H(+) = UDP-N-acetyl-alpha-D-glucosamine + diphosphate. Its pathway is nucleotide-sugar biosynthesis; UDP-N-acetyl-alpha-D-glucosamine biosynthesis; N-acetyl-alpha-D-glucosamine 1-phosphate from alpha-D-glucosamine 6-phosphate (route II): step 2/2. It participates in nucleotide-sugar biosynthesis; UDP-N-acetyl-alpha-D-glucosamine biosynthesis; UDP-N-acetyl-alpha-D-glucosamine from N-acetyl-alpha-D-glucosamine 1-phosphate: step 1/1. The protein operates within bacterial outer membrane biogenesis; LPS lipid A biosynthesis. Catalyzes the last two sequential reactions in the de novo biosynthetic pathway for UDP-N-acetylglucosamine (UDP-GlcNAc). The C-terminal domain catalyzes the transfer of acetyl group from acetyl coenzyme A to glucosamine-1-phosphate (GlcN-1-P) to produce N-acetylglucosamine-1-phosphate (GlcNAc-1-P), which is converted into UDP-GlcNAc by the transfer of uridine 5-monophosphate (from uridine 5-triphosphate), a reaction catalyzed by the N-terminal domain. The protein is Bifunctional protein GlmU of Histophilus somni (strain 2336) (Haemophilus somnus).